Consider the following 299-residue polypeptide: S-fimbrial protein subunit SfaH (299 aa).

The protein belongs to the fimbrial protein family.

It is found in the fimbrium. Functionally, fimbriae (also called pili), polar filaments radiating from the surface of the bacterium to a length of 0.5-1.5 micrometers and numbering 100-300 per cell, enable bacteria to colonize the epithelium of specific host organs. In terms of biological role, a minor fimbrial subunit. This protein is necessary for full expression of S-specific binding. S-fimbrial adhesins enable pathogenic E.coli causing urinary-tract infections or newborn meningitis to attach to glycoproteins terminating with alpha-sialic acid-(2-3)-beta-Gal. This chain is S-fimbrial protein subunit SfaH (sfaH), found in Escherichia coli O6:K15:H31 (strain 536 / UPEC).